The chain runs to 152 residues: Transcription elongation factor Spt5 (152 aa).

The KOW domain occupies 99–129; the sequence is EGDLVEVISGPFRGMQAQVVRVESTKNEVVL.

Belongs to the archaeal Spt5 family. Heterodimer composed of Spt4 and Spt5. Interacts with RNA polymerase (RNAP).

Its function is as follows. Stimulates transcription elongation. The chain is Transcription elongation factor Spt5 from Sulfolobus acidocaldarius (strain ATCC 33909 / DSM 639 / JCM 8929 / NBRC 15157 / NCIMB 11770).